Here is a 641-residue protein sequence, read N- to C-terminus: 1-deoxy-D-xylulose-5-phosphate synthase (641 aa).

Thiamine diphosphate is bound by residues His-78 and 119–121 (AHS). Asp-150 provides a ligand contact to Mg(2+). Thiamine diphosphate contacts are provided by residues 151–152 (GA), Asn-179, Tyr-288, and Glu-370. A Mg(2+)-binding site is contributed by Asn-179.

This sequence belongs to the transketolase family. DXPS subfamily. In terms of assembly, homodimer. Requires Mg(2+) as cofactor. The cofactor is thiamine diphosphate.

The catalysed reaction is D-glyceraldehyde 3-phosphate + pyruvate + H(+) = 1-deoxy-D-xylulose 5-phosphate + CO2. It participates in metabolic intermediate biosynthesis; 1-deoxy-D-xylulose 5-phosphate biosynthesis; 1-deoxy-D-xylulose 5-phosphate from D-glyceraldehyde 3-phosphate and pyruvate: step 1/1. Its function is as follows. Catalyzes the acyloin condensation reaction between C atoms 2 and 3 of pyruvate and glyceraldehyde 3-phosphate to yield 1-deoxy-D-xylulose-5-phosphate (DXP). In Azorhizobium caulinodans (strain ATCC 43989 / DSM 5975 / JCM 20966 / LMG 6465 / NBRC 14845 / NCIMB 13405 / ORS 571), this protein is 1-deoxy-D-xylulose-5-phosphate synthase.